Here is a 652-residue protein sequence, read N- to C-terminus: Phosphomethylpyrimidine synthase (652 aa).

Substrate contacts are provided by residues Asn257, Met286, Tyr315, His351, 371 to 373 (SRG), 412 to 415 (DGLR), and Glu451. His455 is a Zn(2+) binding site. Residue Tyr478 participates in substrate binding. His519 is a binding site for Zn(2+). Residues Cys599, Cys602, and Cys607 each coordinate [4Fe-4S] cluster.

This sequence belongs to the ThiC family. Homodimer. It depends on [4Fe-4S] cluster as a cofactor.

It catalyses the reaction 5-amino-1-(5-phospho-beta-D-ribosyl)imidazole + S-adenosyl-L-methionine = 4-amino-2-methyl-5-(phosphooxymethyl)pyrimidine + CO + 5'-deoxyadenosine + formate + L-methionine + 3 H(+). The protein operates within cofactor biosynthesis; thiamine diphosphate biosynthesis. In terms of biological role, catalyzes the synthesis of the hydroxymethylpyrimidine phosphate (HMP-P) moiety of thiamine from aminoimidazole ribotide (AIR) in a radical S-adenosyl-L-methionine (SAM)-dependent reaction. The protein is Phosphomethylpyrimidine synthase of Thiobacillus denitrificans (strain ATCC 25259 / T1).